We begin with the raw amino-acid sequence, 365 residues long: Tubulin-like protein CetZ (365 aa).

GTP is bound by residues 10 to 14 (QCGTK), 103 to 105 (GTG), E136, N163, and N181.

This sequence belongs to the CetZ family.

It is found in the cytoplasm. In terms of biological role, involved in cell shape control. The chain is Tubulin-like protein CetZ from Pyrococcus horikoshii (strain ATCC 700860 / DSM 12428 / JCM 9974 / NBRC 100139 / OT-3).